We begin with the raw amino-acid sequence, 93 residues long: Large ribosomal subunit protein uL23cz/uL23cy (93 aa).

The protein belongs to the universal ribosomal protein uL23 family. As to quaternary structure, part of the 50S ribosomal subunit.

The protein resides in the plastid. It is found in the chloroplast. Functionally, binds to 23S rRNA. The polypeptide is Large ribosomal subunit protein uL23cz/uL23cy (rpl23-A) (Phaseolus angularis (Azuki bean)).